A 556-amino-acid chain; its full sequence is Oxygen-dependent choline dehydrogenase (556 aa).

Position 4–33 (4–33 (DYIIIGAGSAGNVLATRLTEDPNTTVLLLE)) interacts with FAD. H473 functions as the Proton acceptor in the catalytic mechanism.

This sequence belongs to the GMC oxidoreductase family. FAD serves as cofactor.

The protein localises to the cell membrane. The enzyme catalyses choline + A = betaine aldehyde + AH2. The catalysed reaction is betaine aldehyde + NAD(+) + H2O = glycine betaine + NADH + 2 H(+). Its pathway is amine and polyamine biosynthesis; betaine biosynthesis via choline pathway; betaine aldehyde from choline (cytochrome c reductase route): step 1/1. Its function is as follows. Involved in the biosynthesis of the osmoprotectant glycine betaine. Catalyzes the oxidation of choline to betaine aldehyde and betaine aldehyde to glycine betaine at the same rate. This is Oxygen-dependent choline dehydrogenase from Escherichia coli O6:H1 (strain CFT073 / ATCC 700928 / UPEC).